Consider the following 102-residue polypeptide: Carboxysome shell protein CcmK3 (102 aa).

Residues 4-90 enclose the BMC domain; the sequence is AVGTIQTLGF…PQENVETVMP (87 aa).

Belongs to the bacterial microcompartments protein family. CcmK subfamily. As to quaternary structure, interacts stably with CcmK4, probably forms heterohexamers with a 1:2 CcmK3:CcmK4 stoichiometry. Bulky residues in the pore region probably preclude the formation of homohexamers by this subunit.

It localises to the carboxysome. A non-essential, minor shell protein of the carboxysome, a polyhedral inclusion where RuBisCO (ribulose bisphosphate carboxylase, rbcL-rbcS) is sequestered. Hexamers form sheets that form the facets of the polyhedral carboxysome. In PCC 7942 there are several CcmK paralogs with presumably functional differences. This subunit probably only makes heterohexamers with CcmK4. The CcmK3-CcmK4 heterohexmers have been suggested to cap other hexamers, perhaps to alter metabolite flux. In Synechococcus elongatus (strain ATCC 33912 / PCC 7942 / FACHB-805) (Anacystis nidulans R2), this protein is Carboxysome shell protein CcmK3.